We begin with the raw amino-acid sequence, 206 residues long: Macrophage immunometabolism regulator (206 aa).

The protein belongs to the UNC119-binding protein family. In terms of assembly, interacts with unc119 family proteins; interaction preferentially takes place when unc119 proteins are unliganded with myristoylated proteins.

Its subcellular location is the cytoplasm. It is found in the cell projection. The protein resides in the cilium. Functionally, may play a role in immune regulation through regulation of the macrophage function. Involved in the recruitment of macrophages in response to injury. May also play a role in trafficking of proteins via its interaction with unc119 family cargo adapters. May play a role in ciliary membrane localization. Its function is as follows. Regulates the macrophage function, by enhancing the resolution of inflammation and wound repair functions mediated by M2 macrophages. The regulation of macrophage function is, due at least in part, to the role of C5orf30 in regulating ability to inhibit glycolysis. Probably plays alaso a role in trafficking of proteins via its interaction with UNC119 and UNC119B cargo adapters: may help the release of UNC119 and UNC119B cargo or the recycling of UNC119 and UNC119B. May play a role in ciliary membrane localization via its interaction with UNC119B and protein transport into photoreceptor cells. This chain is Macrophage immunometabolism regulator (macir), found in Danio rerio (Zebrafish).